A 29-amino-acid chain; its full sequence is Cytochrome b6-f complex subunit 8 (29 aa).

Residues 3-23 (ILALGWVSVLALFTWSIAMVV) traverse the membrane as a helical segment.

It belongs to the PetN family. The 4 large subunits of the cytochrome b6-f complex are cytochrome b6, subunit IV (17 kDa polypeptide, PetD), cytochrome f and the Rieske protein, while the 4 small subunits are PetG, PetL, PetM and PetN. The complex functions as a dimer.

The protein localises to the cellular thylakoid membrane. Component of the cytochrome b6-f complex, which mediates electron transfer between photosystem II (PSII) and photosystem I (PSI), cyclic electron flow around PSI, and state transitions. The sequence is that of Cytochrome b6-f complex subunit 8 from Gloeothece citriformis (strain PCC 7424) (Cyanothece sp. (strain PCC 7424)).